A 456-amino-acid polypeptide reads, in one-letter code: Acetylcholine receptor subunit alpha (456 aa).

The signal sequence occupies residues Met-1 to Cys-20. At Ser-21 to Leu-230 the chain is on the extracellular side. Disulfide bonds link Cys-148–Cys-162 and Cys-212–Cys-213. N-linked (GlcNAc...) asparagine glycosylation is present at Asn-161. A run of 3 helical transmembrane segments spans residues Pro-231–Leu-255, Met-263–Val-281, and Tyr-297–Ile-316. Residues Asn-317 to His-428 are Cytoplasmic-facing. A helical membrane pass occupies residues Ile-429–Ala-447.

The protein belongs to the ligand-gated ion channel (TC 1.A.9) family. Acetylcholine receptor (TC 1.A.9.1) subfamily. Alpha-1/CHRNA1 sub-subfamily. As to quaternary structure, one of the alpha chains that assemble within the acetylcholine receptor, a pentamer of two alpha chains, a beta, a delta, and a gamma or epsilon chains.

The protein localises to the postsynaptic cell membrane. It localises to the cell membrane. It catalyses the reaction K(+)(in) = K(+)(out). The enzyme catalyses Na(+)(in) = Na(+)(out). Functionally, upon acetylcholine binding, the AChR responds by an extensive change in conformation that affects all subunits and leads to opening of an ion-conducting channel across the plasma membrane. The sequence is that of Acetylcholine receptor subunit alpha (chrna1) from Danio rerio (Zebrafish).